An 839-amino-acid polypeptide reads, in one-letter code: Protein translocase subunit SecA (839 aa).

ATP-binding positions include Q85, 103 to 107 (GEGKT), and D493. The span at 780-790 (QIHEQERERAS) shows a compositional bias: basic and acidic residues. Residues 780-839 (QIHEQERERASQRATTAAPQNIQSQQSANTDDLPKVERNEACPCGSGKKFKNCHGRKSFS) are disordered. The span at 791–809 (QRATTAAPQNIQSQQSANT) shows a compositional bias: polar residues. 4 residues coordinate Zn(2+): C821, C823, C832, and H833. The span at 827–839 (KKFKNCHGRKSFS) shows a compositional bias: basic residues.

The protein belongs to the SecA family. In terms of assembly, monomer and homodimer. Part of the essential Sec protein translocation apparatus which comprises SecA, SecYEG and auxiliary proteins SecDF. Other proteins may also be involved. Requires Zn(2+) as cofactor.

It is found in the cell membrane. Its subcellular location is the cytoplasm. It carries out the reaction ATP + H2O + cellular proteinSide 1 = ADP + phosphate + cellular proteinSide 2.. In terms of biological role, part of the Sec protein translocase complex. Interacts with the SecYEG preprotein conducting channel. Has a central role in coupling the hydrolysis of ATP to the transfer of proteins into and across the cell membrane, serving as an ATP-driven molecular motor driving the stepwise translocation of polypeptide chains across the membrane. In Streptococcus pyogenes serotype M28 (strain MGAS6180), this protein is Protein translocase subunit SecA.